The sequence spans 353 residues: G-protein complex alpha subunit gpaA (353 aa).

The segment at 1–25 is disordered; it reads MGCGMSTEDKEGKARNEEIENQLKR. The segment covering 7 to 25 has biased composition (basic and acidic residues); sequence TEDKEGKARNEEIENQLKR. Positions 32–353 constitute a G-alpha domain; it reads NEIKMLLLGA…QENLRLCGLI (322 aa). Residues 35 to 48 are G1 motif; that stretch reads KMLLLGAGESGKST. Positions 47 and 181 each coordinate a divalent metal cation. The interval 173 to 181 is G2 motif; that stretch reads DVLRSRVKT. The G3 motif stretch occupies residues 196-205; sequence YRMFDVGGQR. A G4 motif region spans residues 265-272; it reads ILFLNKID. Residues 323–328 are G5 motif; sequence TCATDT.

It belongs to the G-alpha family. G(q) subfamily. G proteins are composed of 3 units; alpha, beta and gamma. The alpha chain contains the guanine nucleotide binding site. Interacts with gprM.

Functionally, G-protein complex alpha subunit that plays a role in conidiation and regulation of the biosynthesis of secondary metabolites such as dihydroxynaphthalene (DHN)-melanin, via interaction with the G protein-coupled receptor gprM. The protein is G-protein complex alpha subunit gpaA of Aspergillus fumigatus (strain CBS 144.89 / FGSC A1163 / CEA10) (Neosartorya fumigata).